A 1053-amino-acid polypeptide reads, in one-letter code: uncharacterized protein (1053 aa).

The protein belongs to the mycobacterial PPE family.

This is an uncharacterized protein from Mycobacterium tuberculosis (strain ATCC 25618 / H37Rv).